Consider the following 294-residue polypeptide: Probable metallo-hydrolase BURPS1710b_2304 (294 aa).

Residues histidine 68, histidine 70, aspartate 72, histidine 73, histidine 143, aspartate 170, and histidine 212 each coordinate a divalent metal cation.

This sequence belongs to the metallo-beta-lactamase superfamily. The cofactor is a divalent metal cation.

Functionally, probable hydrolase. Does not have beta-lactamase activity. This is Probable metallo-hydrolase BURPS1710b_2304 from Burkholderia pseudomallei (strain 1710b).